A 576-amino-acid chain; its full sequence is (+)-alpha-terpineol synthase (576 aa).

Arg286, Asp323, Asp327, Arg466, and Asn469 together coordinate (2E)-geranyl diphosphate. Mg(2+)-binding residues include Asp323 and Asp327. The short motif at 323 to 327 (DDVYD) is the DDXXD motif element. The Mg(2+) site is built by Asn469, Thr473, and Glu477.

This sequence belongs to the terpene synthase family. Tpsb subfamily. Requires Mg(2+) as cofactor. The cofactor is Mn(2+).

It carries out the reaction (2E,6E)-farnesyl diphosphate = beta-bisabolene + diphosphate. The enzyme catalyses (2E)-geranyl diphosphate + H2O = (R)-alpha-terpineol + diphosphate. The catalysed reaction is (2E)-geranyl diphosphate = (4S)-limonene + diphosphate. Its pathway is secondary metabolite biosynthesis; terpenoid biosynthesis. Monoterpene synthase which catalyzes the conversion of (2E)-geranyl diphosphate (GPP) to (R)-alpha-terpineol and (4S)-limonene, as well as small quantities of linalool, myrcene, (-)-alpha-pinene, (+)-sabinene and geraniol. To a lower extent, catalyzes the conversion of (2E,6E)-farnesyl diphosphate (FPP) to beta-bisabolene. The sequence is that of (+)-alpha-terpineol synthase from Santalum album (White sandalwood).